An 85-amino-acid chain; its full sequence is Large ribosomal subunit protein bL27 (85 aa).

The disordered stretch occupies residues 1-25 (MAHKKGVGSSRNGRDSNPKMLGVKR).

This sequence belongs to the bacterial ribosomal protein bL27 family.

This chain is Large ribosomal subunit protein bL27, found in Roseiflexus castenholzii (strain DSM 13941 / HLO8).